A 376-amino-acid chain; its full sequence is Palmitoyl-[acyl-carrier-protein] 4-desaturase 2, chloroplastic (376 aa).

The transit peptide at 1 to 33 (MELHLALRASPLPAADPGRRPPPPRGNFATNCT) directs the protein to the chloroplast. Positions 114, 149, 152, 202, 235, and 238 each coordinate Fe cation.

This sequence belongs to the fatty acid desaturase type 2 family. As to quaternary structure, homodimer. Requires Fe(2+) as cofactor. Preferentially expressed in the flower labellum.

Its subcellular location is the plastid. It is found in the chloroplast stroma. It carries out the reaction hexadecanoyl-[ACP] + 2 reduced [2Fe-2S]-[ferredoxin] + O2 + 2 H(+) = (4Z)-hexadecenoyl-[ACP] + 2 oxidized [2Fe-2S]-[ferredoxin] + 2 H2O. The catalysed reaction is octadecanoyl-[ACP] + 2 reduced [2Fe-2S]-[ferredoxin] + O2 + 2 H(+) = (9Z)-octadecenoyl-[ACP] + 2 oxidized [2Fe-2S]-[ferredoxin] + 2 H2O. It functions in the pathway lipid metabolism; fatty acid metabolism. Its function is as follows. Converts stearoyl-ACP to oleoyl-ACP by introduction of a cis double bond between carbons 9 and 10 of the acyl chain. Converts palmitoyl-ACP to (4Z)-hexadec-4-enoyl-ACP by introduction of a cis double bond between carbons 4 and 5 of the acyl chain. Catalyzes the desaturation of saturated fatty acid 18:0 and 16:0 to generate 18:1 (delta-9) and 16:1 (delta-4) intermediates, expected to give rise to 9-alkenes and 12-alkenes, respectively. In Ophrys sphegodes (Early spider orchid), this protein is Palmitoyl-[acyl-carrier-protein] 4-desaturase 2, chloroplastic (SAD2).